The chain runs to 95 residues: Cytochrome b (95 aa).

The next 3 membrane-spanning stretches (helical) occupy residues 1–16, 40–61, and 76–95; these read GLCLASQLLTGLFLAM, WLIRNMHANGASFFFICIYLHI, and WNIGVVLLLLVMMTAFVGYV. Residues His46 and His60 each contribute to the heme b site.

The protein belongs to the cytochrome b family. The cytochrome bc1 complex contains 3 respiratory subunits (MT-CYB, CYC1 and UQCRFS1), 2 core proteins (UQCRC1 and UQCRC2) and probably 6 low-molecular weight proteins. Heme b serves as cofactor.

The protein localises to the mitochondrion inner membrane. In terms of biological role, component of the ubiquinol-cytochrome c reductase complex (complex III or cytochrome b-c1 complex) that is part of the mitochondrial respiratory chain. The b-c1 complex mediates electron transfer from ubiquinol to cytochrome c. Contributes to the generation of a proton gradient across the mitochondrial membrane that is then used for ATP synthesis. This is Cytochrome b (mt-cyb) from Gomphosus varius (Bird wrasse).